Consider the following 365-residue polypeptide: Carbamoyl phosphate synthase small chain (365 aa).

CPSase regions lie at residues 1-166 (MKRQ…PSPG) and 1-169 (MKRQ…GRGH). 3 residues coordinate L-glutamine: serine 45, glycine 218, and glycine 220. In terms of domain architecture, Glutamine amidotransferase type-1 spans 170-357 (RVVLVDFGMK…LTMIENFKKE (188 aa)). The Nucleophile role is filled by cysteine 245. Residues leucine 246, glutamine 249, asparagine 287, glycine 289, and tyrosine 290 each contribute to the L-glutamine site. Catalysis depends on residues histidine 330 and glutamate 332.

The protein belongs to the CarA family. Composed of two chains; the small (or glutamine) chain promotes the hydrolysis of glutamine to ammonia, which is used by the large (or ammonia) chain to synthesize carbamoyl phosphate. Tetramer of heterodimers (alpha,beta)4.

The catalysed reaction is hydrogencarbonate + L-glutamine + 2 ATP + H2O = carbamoyl phosphate + L-glutamate + 2 ADP + phosphate + 2 H(+). It carries out the reaction L-glutamine + H2O = L-glutamate + NH4(+). The protein operates within amino-acid biosynthesis; L-arginine biosynthesis; carbamoyl phosphate from bicarbonate: step 1/1. It participates in pyrimidine metabolism; UMP biosynthesis via de novo pathway; (S)-dihydroorotate from bicarbonate: step 1/3. Functionally, small subunit of the glutamine-dependent carbamoyl phosphate synthetase (CPSase). CPSase catalyzes the formation of carbamoyl phosphate from the ammonia moiety of glutamine, carbonate, and phosphate donated by ATP, constituting the first step of 2 biosynthetic pathways, one leading to arginine and/or urea and the other to pyrimidine nucleotides. The small subunit (glutamine amidotransferase) binds and cleaves glutamine to supply the large subunit with the substrate ammonia. The polypeptide is Carbamoyl phosphate synthase small chain (Bacillus cereus (strain ATCC 14579 / DSM 31 / CCUG 7414 / JCM 2152 / NBRC 15305 / NCIMB 9373 / NCTC 2599 / NRRL B-3711)).